The sequence spans 198 residues: Snake venom metalloproteinase BpirMP (198 aa).

The Peptidase M12B domain occupies 1-197 (TYIEVAVVAD…HNPQCILNEP (197 aa)). Residues glutamate 4 and aspartate 88 each coordinate Ca(2+). 3 cysteine pairs are disulfide-bonded: cysteine 112/cysteine 192, cysteine 152/cysteine 176, and cysteine 154/cysteine 159. Position 137 (histidine 137) interacts with Zn(2+). The active site involves glutamate 138. 2 residues coordinate Zn(2+): histidine 141 and histidine 147. The Ca(2+) site is built by cysteine 192 and asparagine 195.

This sequence belongs to the venom metalloproteinase (M12B) family. P-I subfamily. In terms of assembly, monomer. It depends on Zn(2+) as a cofactor. As to expression, expressed by the venom gland.

It is found in the secreted. Its activity is regulated as follows. Inhibited by the chelating agents EDTA, EGTA and 1,10-phenanthroline. Is not inhibited by serine proteinase inhibitors aprotinin, leupeptin and benzamidine. Functionally, zinc metalloprotease that preferentially degrades Aalpha chain of fibrinogen (FGA) (at a dose of 5 ug, whereas at a dose of 10 ug, both FGA and FGB are completely degraded). Degrades fibrin gel in a dose-dependent manner, as well blood clots formed in vitro (thrombolytic activity). Induces hemorrhage (in the dorsal skin of mice), with an MHD of 50 ug. The basal membrane components collagen (all chains of type IV) (COL4A4), fibronectin (FN1), laminin and nidogen are all degraded by this toxin. The chain is Snake venom metalloproteinase BpirMP from Bothrops pirajai (Piraja's lancehead).